We begin with the raw amino-acid sequence, 261 residues long: Putative hydro-lyase SSP0308 (261 aa).

Belongs to the D-glutamate cyclase family.

In Staphylococcus saprophyticus subsp. saprophyticus (strain ATCC 15305 / DSM 20229 / NCIMB 8711 / NCTC 7292 / S-41), this protein is Putative hydro-lyase SSP0308.